Reading from the N-terminus, the 141-residue chain is Acetyltransferase YpeA (141 aa).

Residues 1–141 (MEIRVFRQED…GKRLIEDEEY (141 aa)) enclose the N-acetyltransferase domain.

This sequence belongs to the acetyltransferase family. YpeA subfamily.

This chain is Acetyltransferase YpeA (ypeA), found in Escherichia coli (strain K12).